The primary structure comprises 342 residues: Ribosomal RNA small subunit methyltransferase H (342 aa).

S-adenosyl-L-methionine is bound by residues 36 to 38 (GGH), D56, F82, D100, and Q107. The interval 311 to 342 (GESGMGKGNSAAASRFPTADSPFPASANGDAA) is disordered.

This sequence belongs to the methyltransferase superfamily. RsmH family.

Its subcellular location is the cytoplasm. The enzyme catalyses cytidine(1402) in 16S rRNA + S-adenosyl-L-methionine = N(4)-methylcytidine(1402) in 16S rRNA + S-adenosyl-L-homocysteine + H(+). Its function is as follows. Specifically methylates the N4 position of cytidine in position 1402 (C1402) of 16S rRNA. This chain is Ribosomal RNA small subunit methyltransferase H, found in Xanthomonas axonopodis pv. citri (strain 306).